The sequence spans 154 residues: Ribosome maturation factor RimP (154 aa).

Belongs to the RimP family.

The protein resides in the cytoplasm. Required for maturation of 30S ribosomal subunits. In Clostridium perfringens (strain SM101 / Type A), this protein is Ribosome maturation factor RimP.